The sequence spans 886 residues: KH domain-containing protein hrpk-2 (886 aa).

Positions 359–368 (DNHFYNDKDS) are enriched in basic and acidic residues. A disordered region spans residues 359–433 (DNHFYNDKDS…SHRKESACVD (75 aa)). 2 stretches are compositionally biased toward basic residues: residues 369-388 (GKHH…KKHY) and 415-425 (HERKKRQRSSH). 2 consecutive KH domains span residues 698–761 (KETV…IEKI) and 775–839 (PGIF…AYLT).

The protein is KH domain-containing protein hrpk-2 of Caenorhabditis elegans.